A 241-amino-acid chain; its full sequence is MGLFESNLPKHIAVIMDGNGRWATSRGKSRSEGHREGAQAIDRLMDASLELGLKNISLYAFSTENWKRPVTEIRSIFSLLIEFIETRLDTIHKRGIRILHSGSRKKLTRGVLDKIDFAVDKTQKNKNLTVNFCLNYGSRDELLRAAQELFLERKRSKVALEKPLKEKEFEKFLYTSILPPVDLLIRTAGEQRLSNFLLWQSAYAELYFTDTLWPEFDKNSLVDSLKWYETRTRKFGGLTNG.

Residue D17 is part of the active site. D17 lines the Mg(2+) pocket. Substrate-binding positions include 18-21 (GNGR), W22, R30, H34, and 62-64 (STE). N65 acts as the Proton acceptor in catalysis. Substrate is bound by residues W66, R68, R186, and 192-194 (RLS). E205 is a binding site for Mg(2+).

The protein belongs to the UPP synthase family. Homodimer. Requires Mg(2+) as cofactor.

In terms of biological role, catalyzes the condensation of isopentenyl diphosphate (IPP) with allylic pyrophosphates generating different type of terpenoids. This chain is Isoprenyl transferase, found in Leptospira interrogans serogroup Icterohaemorrhagiae serovar copenhageni (strain Fiocruz L1-130).